We begin with the raw amino-acid sequence, 238 residues long: Uridylate kinase (238 aa).

12–15 (KLSG) is an ATP binding site. UMP is bound at residue Gly-54. Residues Gly-55 and Arg-59 each contribute to the ATP site. Residues Asp-74 and 135-142 (TGNPFFTT) each bind UMP. ATP contacts are provided by Thr-162, Tyr-168, and Asp-171.

This sequence belongs to the UMP kinase family. In terms of assembly, homohexamer.

The protein resides in the cytoplasm. It catalyses the reaction UMP + ATP = UDP + ADP. The protein operates within pyrimidine metabolism; CTP biosynthesis via de novo pathway; UDP from UMP (UMPK route): step 1/1. Its activity is regulated as follows. Inhibited by UTP. Catalyzes the reversible phosphorylation of UMP to UDP. This chain is Uridylate kinase, found in Aromatoleum aromaticum (strain DSM 19018 / LMG 30748 / EbN1) (Azoarcus sp. (strain EbN1)).